Reading from the N-terminus, the 189-residue chain is MAPAWSLLLALLLLSCNAICSLGCHLPHSHSLAKRRVLTLLRQLRRVSPSSCLQDRNDFAFPQEALGGSQLQKAQAISVLHEVTQHTFQLSSTEGSAAVWDESLLDKLRTALDQQLTDLQACLRQEEGLPGAPLLKEDSSLAVRKYFHRLTLYLQEKRHSPCAWEVVRAQVMRAFSSSTNLQERFRRKD.

The N-terminal stretch at Met1–Gly23 is a signal peptide. 2 cysteine pairs are disulfide-bonded: Cys24–Cys122 and Cys52–Cys162.

The protein belongs to the alpha/beta interferon family.

Its subcellular location is the secreted. Produced by macrophages, IFN-alpha have antiviral activities. Interferon stimulates the production of two enzymes: a protein kinase and an oligoadenylate synthetase. This chain is Interferon alpha-D (IFNAD), found in Bos taurus (Bovine).